A 359-amino-acid chain; its full sequence is Putative X-Core fused protein (359 aa).

2 disordered regions span residues 25–48 (SRGR…VPAD) and 312–359 (NAPI…ESQC). The segment covering 325–352 (VRRRGRSPRRRTPSPRRRRSESPRRRRS) has biased composition (basic residues).

This Homo sapiens (Human) protein is Putative X-Core fused protein.